The sequence spans 140 residues: Endoribonuclease YbeY (140 aa).

3 residues coordinate Zn(2+): H100, H104, and H110.

Belongs to the endoribonuclease YbeY family. Requires Zn(2+) as cofactor.

The protein localises to the cytoplasm. In terms of biological role, single strand-specific metallo-endoribonuclease involved in late-stage 70S ribosome quality control and in maturation of the 3' terminus of the 16S rRNA. This chain is Endoribonuclease YbeY, found in Helicobacter pylori (strain P12).